An 88-amino-acid chain; its full sequence is ATP synthase F(0) complex subunit f, mitochondrial (88 aa).

A2 is subject to N-acetylalanine. S3 is subject to Phosphoserine. K16 is modified (N6-acetyllysine). Residues 62 to 79 (MVLAAYVVFSYCISYKEL) traverse the membrane as a helical segment.

Belongs to the ATPase F chain family. In terms of assembly, component of the ATP synthase complex composed at least of ATP5F1A/subunit alpha, ATP5F1B/subunit beta, ATP5MC1/subunit c (homooctomer), MT-ATP6/subunit a, MT-ATP8/subunit 8, ATP5ME/subunit e, ATP5MF/subunit f, ATP5MG/subunit g, ATP5MK/subunit k, ATP5MJ/subunit j, ATP5F1C/subunit gamma, ATP5F1D/subunit delta, ATP5F1E/subunit epsilon, ATP5PF/subunit F6, ATP5PB/subunit b, ATP5PD/subunit d, ATP5PO/subunit OSCP. ATP synthase complex consists of a soluble F(1) head domain (subunits alpha(3) and beta(3)) - the catalytic core - and a membrane F(0) domain - the membrane proton channel (subunits c, a, 8, e, f, g, k and j). These two domains are linked by a central stalk (subunits gamma, delta, and epsilon) rotating inside the F1 region and a stationary peripheral stalk (subunits F6, b, d, and OSCP).

Its subcellular location is the mitochondrion. It is found in the mitochondrion inner membrane. Subunit f, of the mitochondrial membrane ATP synthase complex (F(1)F(0) ATP synthase or Complex V) that produces ATP from ADP in the presence of a proton gradient across the membrane which is generated by electron transport complexes of the respiratory chain. ATP synthase complex consist of a soluble F(1) head domain - the catalytic core - and a membrane F(1) domain - the membrane proton channel. These two domains are linked by a central stalk rotating inside the F(1) region and a stationary peripheral stalk. During catalysis, ATP synthesis in the catalytic domain of F(1) is coupled via a rotary mechanism of the central stalk subunits to proton translocation. In vivo, can only synthesize ATP although its ATP hydrolase activity can be activated artificially in vitro. Part of the complex F(0) domain. The polypeptide is ATP synthase F(0) complex subunit f, mitochondrial (Mus musculus (Mouse)).